The chain runs to 1452 residues: ABC-type transporter adrC (1452 aa).

Positions 1-38 are disordered; the sequence is MAPEEGDQAMSHEDKAACSSLNTTSSTELFDGAPSSEN. A compositionally biased stretch (polar residues) spans 19-28; sequence SSLNTTSSTE. Residues 116–378 form the ABC transporter 1 domain; it reads KRLMSIVGNK…FETMGWKRPP (263 aa). Helical transmembrane passes span 487–507, 524–544, 569–589, 598–618, 631–651, and 738–758; these read IPAL…IGSL, VLFL…TTLY, VIVD…IVYF, SHFF…ATIF, AMAL…FTVP, and GILV…TELI. The ABC transporter 2 domain maps to 813 to 1055; sequence FSWKGLSYDI…TVLEYLEDKG (243 aa). ATP is bound at residue 849 to 856; it reads GVSGAGKT. Transmembrane regions (helical) follow at residues 1149 to 1169, 1181 to 1201, 1224 to 1244, 1264 to 1284, 1287 to 1307, 1322 to 1344, and 1415 to 1435; these read YILA…FSFW, VLFS…QIMP, VFIL…GICT, LVLL…QLVV, VPSV…CLLF, IFMN…ALHG, and FGIF…LYYL.

It belongs to the ABC transporter superfamily. ABCG family. PDR (TC 3.A.1.205) subfamily.

Its subcellular location is the membrane. Functionally, ABC-type transporter; part of the gene cluster that mediates the biosynthesis of the meroterpenoid compound andrastin A, a promising antitumoral compound. Is required for the production of andrastin A but does not have a significant role in its secretion. This is ABC-type transporter adrC from Penicillium roqueforti.